The chain runs to 411 residues: 2-oxoglutarate-dependent dioxygenase AOP3 (411 aa).

A Fe2OG dioxygenase domain is found at 259–356 (GNASVGAKEA…RYAAALFSNP (98 aa)). The Fe cation site is built by H279, D281, and H336. R347 provides a ligand contact to 2-oxoglutarate.

It belongs to the iron/ascorbate-dependent oxidoreductase family. Fe(2+) is required as a cofactor. Not expressed.

Functionally, 2-oxoglutarate-dependent dioxygenase involved in glucosinolates biosynthesis. Catalyzes the conversion of methylsulfinylalkyl glucosinolates to hydroxyalkyl glucosinolates. The sequence is that of 2-oxoglutarate-dependent dioxygenase AOP3 (AOP3) from Arabidopsis thaliana (Mouse-ear cress).